We begin with the raw amino-acid sequence, 583 residues long: Membrane protein insertase YidC (583 aa).

Residues 5–25 form a helical membrane-spanning segment; that stretch reads SVTGLALIALIMIVWLQFMSP. Residues 28 to 50 form a disordered region; the sequence is KSVQPDNRPKAQTTATVSQEKTE. Polar residues predominate over residues 37–46; the sequence is KAQTTATVSQ. A run of 5 helical transmembrane segments spans residues 341–361, 362–382, 427–447, 477–497, and 515–535; these read PFAEYVILPVFTWMNGFISNY, GLIIIIFALLIKLVTYPLSMA, LGGCLPVVLQMPLLFAMFYVF, IPVYGDHIAVFPILMGVTVFI, and LYIFPVTMLLFFNNLPAGLGL.

The protein belongs to the OXA1/ALB3/YidC family. Type 1 subfamily. Interacts with the Sec translocase complex via SecD. Specifically interacts with transmembrane segments of nascent integral membrane proteins during membrane integration.

It localises to the cell inner membrane. Required for the insertion and/or proper folding and/or complex formation of integral membrane proteins into the membrane. Involved in integration of membrane proteins that insert both dependently and independently of the Sec translocase complex, as well as at least some lipoproteins. Aids folding of multispanning membrane proteins. In Chlorobium limicola (strain DSM 245 / NBRC 103803 / 6330), this protein is Membrane protein insertase YidC.